The primary structure comprises 336 residues: Vomeronasal type-1 receptor 102 (336 aa).

Residues 1–42 (MVGVQICQGMTSEILFFSLQPQFSNMMNKNSRLHIDSNIRNT) are Extracellular-facing. The helical transmembrane segment at 43 to 63 (FFTEIGIGVSANSLLLLFNIF) threads the bilayer. Residues 64-75 (KFIHGQRSRLTD) are Cytoplasmic-facing. The helical transmembrane segment at 76-96 (LPIGLLSLINLLMLLIMACIA) threads the bilayer. Topologically, residues 97 to 120 (TDIFISCRRWDDIICKSLLYLYRT) are extracellular. Residues Cys-111 and Cys-198 are joined by a disulfide bond. Residues 121-140 (FRGLSLSTTCLLSVLQAIIL) traverse the membrane as a helical segment. Residues 141 to 157 (SPRSSCLAKYKHKPPHH) are Cytoplasmic-facing. Residues 158 to 178 (IFCAMLFLSVLYMFISSHLLL) traverse the membrane as a helical segment. Residues 179 to 213 (SIIATPNLTTNDFIHVSQSCSILPMSYLMQSMFST) are Extracellular-facing. N-linked (GlcNAc...) asparagine glycosylation is present at Asn-185. Residues 214-234 (LLAIRNVFLISLIVLSTWYMV) traverse the membrane as a helical segment. The Cytoplasmic portion of the chain corresponds to 235 to 264 (ALLCRHRKQTRHLQDTSLSRKASPEQRATR). A helical membrane pass occupies residues 265 to 285 (SILMLRSLFVLMSIFDSIVSC). The Extracellular portion of the chain corresponds to 286–296 (SRTMYLNDPTS). A helical transmembrane segment spans residues 297 to 317 (YSIQLLVVHIYATVSPFVFMI). At 318–336 (TEKHIVNYLKSMYVRVLNV) the chain is on the cytoplasmic side.

This sequence belongs to the G-protein coupled receptor 1 family. In terms of tissue distribution, expressed in 1-4% of neurons of the vomeronasal organ. Only one pheromone receptor gene may be expressed in a particular neuron. Not expressed in the main olfactory epithelium.

It is found in the cell membrane. Putative pheromone receptor implicated in the regulation of social as well as reproductive behavior. The polypeptide is Vomeronasal type-1 receptor 102 (Vom1r102) (Rattus norvegicus (Rat)).